A 721-amino-acid chain; its full sequence is Dipeptidyl-peptidase 5 (721 aa).

The N-terminal stretch at 1-18 is a signal peptide; it reads MGAFRWLSIAAAASTALA. 4 N-linked (GlcNAc...) asparagine glycosylation sites follow: Asn-75, Asn-94, Asn-151, and Asn-254. The tract at residues 271 to 297 is disordered; it reads ARPINGPDSPGTPKGIKGDSSSPVFSP. 2 N-linked (GlcNAc...) asparagine glycosylation sites follow: Asn-380 and Asn-450. Ser-560 (charge relay system) is an active-site residue. N-linked (GlcNAc...) asparagine glycosylation is present at Asn-607. Active-site charge relay system residues include Asp-643 and His-675.

The protein belongs to the peptidase S9C family. N-glycosylated. As to expression, expressed in mycelia and conidia.

The protein resides in the secreted. May be involved in metabolism of dipeptides or may affect host defense mechanisms. Has a substrate specificity limited to the hydrolysis of X-Ala, His-Ser, and Ser-Tyr dipeptides at a neutral pH optimum. This Aspergillus fumigatus (strain CBS 144.89 / FGSC A1163 / CEA10) (Neosartorya fumigata) protein is Dipeptidyl-peptidase 5.